The following is a 419-amino-acid chain: MKVLVLGAGVAGVSSVWYLAEAGHEVTVIDRTEGVAMETSFANAGQLSYGYTTPWAAPGIPTKALKRLFKSHPPLLFRPDGGLYQIEWLWRMLQNCTATRYQINKERMVRISEYSREMFRRFEAQTDMNFEGRKKGTLQIFRQTEEVEAAKQDIAVLERYGVPYRRLKPEECAEFEPALARVTAKIVGGLHLPADATGDCRLFTENLYKLCQEKGVRFYFNQTISRIDHNGLRIKAVETETGRFETDAVVCALGCFSRTVLAQLDLNLPIYPVKGYSLTLPVTNSDGAPVSTVLDESYKVAITRFDNRIRVGGMAELSGYETKLPEKRRETLALVVNDLFPEGGDLSQALSWSGLRPMTPDSTPLIGRTRFENLFLNTGHGTLGWTMSPGSAKLTADIVSGKDTEIRSDDLSLSRYQKL.

3–17 (VLVLGAGVAGVSSVW) provides a ligand contact to FAD.

Belongs to the DadA oxidoreductase family. It depends on FAD as a cofactor.

It carries out the reaction a D-alpha-amino acid + A + H2O = a 2-oxocarboxylate + AH2 + NH4(+). Its pathway is amino-acid degradation; D-alanine degradation; NH(3) and pyruvate from D-alanine: step 1/1. Its function is as follows. Oxidative deamination of D-amino acids. This chain is D-amino acid dehydrogenase, found in Neisseria gonorrhoeae (strain ATCC 700825 / FA 1090).